We begin with the raw amino-acid sequence, 368 residues long: Putative flavoprotein monooxygenase (368 aa).

FAD-binding positions include alanine 14, glutamate 34, serine 41, 52–53 (IT), valine 110, alanine 307, and isoleucine 319.

It depends on FAD as a cofactor.

FAD-binding protein that may have monooxygenase activity using NADPH and/or NADH as an electron donor. This chain is Putative flavoprotein monooxygenase, found in Staphylococcus aureus (strain Mu50 / ATCC 700699).